The chain runs to 383 residues: Na(+)/H(+) antiporter NhaA (383 aa).

11 consecutive transmembrane segments (helical) span residues 10-30, 56-76, 91-111, 121-141, 150-170, 174-194, 206-226, 254-274, 275-295, 327-347, and 355-375; these read LIGG…NNSP, LMHW…GLEI, IITP…IYLS, GWAI…ALLG, LLVI…IAIF, SLSL…IICN, VVLG…ATLA, PWII…ISFS, GISF…GLFV, GISL…VLAF, and AIKI…YIVL.

This sequence belongs to the NhaA Na(+)/H(+) (TC 2.A.33) antiporter family.

It is found in the cell inner membrane. It catalyses the reaction Na(+)(in) + 2 H(+)(out) = Na(+)(out) + 2 H(+)(in). Na(+)/H(+) antiporter that extrudes sodium in exchange for external protons. The polypeptide is Na(+)/H(+) antiporter NhaA (Francisella tularensis subsp. novicida (strain U112)).